The following is a 172-amino-acid chain: FMN reductase (NADH) RutF 2 (172 aa).

This sequence belongs to the non-flavoprotein flavin reductase family. RutF subfamily.

The catalysed reaction is FMNH2 + NAD(+) = FMN + NADH + 2 H(+). Catalyzes the reduction of FMN to FMNH2 which is used to reduce pyrimidine by RutA via the Rut pathway. The polypeptide is FMN reductase (NADH) RutF 2 (Methylorubrum extorquens (strain PA1) (Methylobacterium extorquens)).